A 138-amino-acid polypeptide reads, in one-letter code: MNNKFKDFFGFGDNDSYEERDAYEEHYDEQEEMQNSNRPTNSRDSNVVSIKAGQAGSGPSKIVLYEPRVYSDAKEVAQNLLNQRAIIINFSRMDDASARRVVDFITGTVYALNGEIQRIGDKIFLATPPKFETDGKIT.

The tract at residues 1-59 (MNNKFKDFFGFGDNDSYEERDAYEEHYDEQEEMQNSNRPTNSRDSNVVSIKAGQAGSGP) is disordered. The segment covering 33–48 (MQNSNRPTNSRDSNVV) has biased composition (polar residues).

This sequence belongs to the SepF family. In terms of assembly, homodimer. Interacts with FtsZ.

The protein resides in the cytoplasm. Its function is as follows. Cell division protein that is part of the divisome complex and is recruited early to the Z-ring. Probably stimulates Z-ring formation, perhaps through the cross-linking of FtsZ protofilaments. Its function overlaps with FtsA. The chain is Cell division protein SepF from Lactobacillus delbrueckii subsp. bulgaricus (strain ATCC 11842 / DSM 20081 / BCRC 10696 / JCM 1002 / NBRC 13953 / NCIMB 11778 / NCTC 12712 / WDCM 00102 / Lb 14).